Consider the following 2143-residue polypeptide: MTANNDDDIKSPIPITNKTLSQLKRFERSPGRPSSSQGEIKRKKSRLYAADGRPHSPLRARSATPTLQDQKLFNGMDSTSLLNERLQHYTLDYVSDRAQHMKNIYDPSSRWFSRSVRPEFPIEEFLPYKTESHEDQAKYLCHVLVNLYIAISSLDIQGLISISSKDLADLKKEVDDLALKTDLFRLSNNTAENDLLGNDIADYDDAEGLEDELDEYFDLAGPDFNATGKITAKSATIVNVNHWTNELKNCLHFDFPVALRKSLATVYYYLSLVQGQKVYRQMHVDMFERLVSLDDDRTNFTELLQKQGLLLDHQIMLNFLCEFLPYPDPDYARYELSSKEDLQLFRLLLKHAHNAKPFFDKSKESLLVDTMNFLLSSLAPSTMMAVMPIVTSVVPYHYHIHSKIIDYFPFCYSIWSSVSANVAIDTHMYDFVGSISKDVHNKILSSEHEKDVVGVEFGEFGIFTDDQMTFMFNRLQGHLRTDGQIHSYSRTVKPFVYAINGSKKDRFFEKLVSLAKAIETFIHPSNNGFWTKPNAKFVHAFIKSYHGRVKYEEDICARGVTNGICLTSFCHEEIVEIFLNIISLGSQNKNPDIANYYISCFAYLLELDPSNAYLIYDKILIDLYDTLADQFINSRHRIISSLKQFTRVIRFIVMDKLYRVHITNVLSMLVSKLDMNDTNLTSNLINGIVSIAAFIPIQDLTGEDDYISFESDTLPLVQQHFYHIKCGESSKTFRVDDELLNNAFKASTTVFQSMLKVYVEKIFQLVDVDLEDSLVTKINQTTMILQESMDDKIFNYFASLLQRNFWSNDSFKEKDPNYELVTIPLAALVRRNNGLSKELVRTLLFHIKEQIKRGAGSVRSTSEIQQRDVKLVLYLTALNDVLRQCHESLLEYSDELITFMKYLYDNVTNPPLDVITSIVIHSALATLCTTEITDCRLFPEDSKIPEKDRWGGLQFDPRRFDKQHLSFQWHVPSSDEITLSISILESLSEYCINNVEELMKAPRHDSEYGDMIQKYVLVMTHTLSGSSLLFDPDFNKYRTQSNLSYREKLILLKNIRENNCDPQELDIDIEQIRSGKDDEDYIESKDIEAGLNAGVSDVVQLRDEFPDELIVDEEVVSEMPSGVNTPIAGTHGTDNSAMSSDLAFRDLDIYTCNYYFGNTTEEKLQNPQYLQVHRVRARIGHFFHKLYVFLSTNFENNTNMFQILLHGLKVWFTDLGQETVFNEDPNAFIDVDFLENVQSLSHVNEPFTRTNFAIRANSLHQSRVLLHSTNRKASKLENLLLVDIIQLATSLYPDIYKPAQGTLVHCMKQLVGSYGVVINKIIPSLEKAIKDHDYMKIQVILNVLLIKKIHRKLMTDYKDIGRLIFLLIECCRVNELEIGMYADKILTDIVIGIKIPSSVCVISDQAFLPLAPPDGTINLQVEAVKLAKKKKREYYLSLLVDLQDKLLDKLDNEKDMGWKIRMFILRFVTQIQSNLESKPDKRAVFSIISQISTKHPEIIHLVVKSLLSTCNKIISLSDYEYDITRAYKNEFNPSFVEILDTSTTSFPKTFTEEMNNFDNPKYFIDLRAYVGWLCWGRLMYVMSPKALKLNLRENELEVLKTAGHLLTREFLRDVTMNLVQDNETRGVFSSGNVSFFSLVILLISSGFCELNMSDLFELCESYYNKDDKASMIMSVEIVAGLVCGSKFMSVSDLDKRDTFIENFLAKCLDYELNHDAFEIWSTLAWWLPAVVDLRRSKTFFCHFINADGMFDRESDAATHQTSKIYMLRSILMSMEFRAPDVGKLFDELVFDHPYDQVRQAVAKLLTTLVQNQSNPSISDPTTLLEAERNDPDGLGLPLKSVPEKVDAYIKKQFEIIKNLEDSVVGLNPQQFIKTDYFYRTSTIFYWIKEMARGPNKVLLVPYLVDYVLPFLIGLVKHKDVCALASLDPVRLYAGLGYMPIRKNHVAAIVDYVCSSNVALSSNQTKLQLAFIQHFLSAELLQLTEEEKNKILEFVVSNLYNEQFVEVRVRAASILSDIVHNWKEEQPLLSLIERFAKGLDVNKYTSKERQKLSKTDIKIHGNVLGLGAIISAFPYVFPLPPWIPKQLSNLSSWARTSGMTGQAAKNTISEFKKVRADTWKFDRASFNTEELEDLEGVLWRSYYA.

The segment at 1 to 65 (MTANNDDDIK…SPLRARSATP (65 aa)) is disordered. Phosphoserine occurs at positions 11, 29, 56, and 62. Phosphothreonine occurs at positions 64 and 66. The residue at position 1041 (S1041) is a Phosphoserine. The stretch at 1316-1355 (VVINKIIPSLEKAIKDHDYMKIQVILNVLLIKKIHRKLMT) is one HEAT 1 repeat. Residues 1648–1732 (CELNMSDLFE…LAWWLPAVVD (85 aa)) form a bromodomain-like (BRDL) region. 3 HEAT repeats span residues 1779 to 1814 (PDVGKLFDELVFDHPYDQVRQAVAKLLTTLVQNQSN), 1902 to 1941 (YLVDYVLPFLIGLVKHKDVCALASLDPVRLYAGLGYMPIR), and 1985 to 2023 (EEKNKILEFVVSNLYNEQFVEVRVRAASILSDIVHNWKE). The YYX motif signature appears at 2141–2143 (YYA).

The protein belongs to the BLM10 family. In terms of assembly, according to PubMed:12973301, colocalizes with nascent proteasome. According to PubMed:15778719, associates with proteasome core particles and also forms a complex with regulatory particle-core particle (RP-CP).

It is found in the nucleus. The protein localises to the cytoplasm. In terms of biological role, associated component of the proteasome that specifically recognizes acetylated histones and promotes ATP- and ubiquitin-independent degradation of core histones during DNA damage response. Recognizes and binds acetylated histones via its bromodomain-like (BRDL) region and activates the proteasome by opening the gated channel for substrate entry. Binds to the core proteasome via its C-terminus, which occupies the same binding sites as the proteasomal ATPases, opening the closed structure of the proteasome via an active gating mechanism. Involved in DNA damage response in somatic cells: binds to acetylated histones and promotes degradation of histones following DNA double-strand breaks. The sequence is that of Proteasome activator BLM10 (BLM10) from Saccharomyces cerevisiae (strain ATCC 204508 / S288c) (Baker's yeast).